A 347-amino-acid polypeptide reads, in one-letter code: MRALGAVITLLLWGQLFAADFGNEVTDIADDSCPKPPEIANGYVEHLVRYQCKNYYRLRTEGDGVYALNSEKQWVNKAVGEQLPECEAVCGKPKHPVDQVQRIIGGSLDAKGSFPWQAKMVSRHNLVTGATLISEQWLLTTAKNLFLNHTENATAQDIAPTLTLYLGRRQLVEIEKVVLHPNYSEVDIGLIKLKDKVPVNERVMPICLPSKDYTEVGRVGYVSGWGRNSNFTYTDHLKYVMLPVADQDKCIQHYENSTVPENKIPKNPVGVQPILNEHTFCAGMSKYQEDTCYGDAGSTFAIHDLQQDTWYAAGILSFDKSCTVAEYGVYVKTFNILDWIQKTIASN.

Positions 1–18 are cleaved as a signal peptide; it reads MRALGAVITLLLWGQLFA. Residues 31–88 form the Sushi domain; sequence DSCPKPPEIANGYVEHLVRYQCKNYYRLRTEGDGVYALNSEKQWVNKAVGEQLPECEA. Disulfide bonds link Cys52–Cys86 and Cys90–Cys207. One can recognise a Peptidase S1 domain in the interval 103-345; the sequence is IIGGSLDAKG…ILDWIQKTIA (243 aa). N-linked (GlcNAc...) asparagine glycosylation is found at Asn148, Asn152, Asn182, Asn230, and Asn256. Intrachain disulfides connect Cys250-Cys281 and Cys292-Cys322. An interaction with CD163 region spans residues 259–264; that stretch reads VPENKI.

Belongs to the peptidase S1 family. In terms of assembly, tetramer of two alpha and two beta chains; disulfide-linked. The hemoglobin/haptoglobin complex is composed of a haptoglobin dimer bound to two hemoglobin alpha-beta dimers. Interacts with CD163. Interacts with ERGIC3. In terms of tissue distribution, expressed by the liver and secreted in plasma.

The protein resides in the secreted. Its function is as follows. As a result of hemolysis, hemoglobin is found to accumulate in the kidney and is secreted in the urine. Haptoglobin captures, and combines with free plasma hemoglobin to allow hepatic recycling of heme iron and to prevent kidney damage. Haptoglobin also acts as an antioxidant, has antibacterial activity and plays a role in modulating many aspects of the acute phase response. Hemoglobin/haptoglobin complexes are rapidly cleared by the macrophage CD163 scavenger receptor expressed on the surface of liver Kupfer cells through an endocytic lysosomal degradation pathway. This Oryctolagus cuniculus (Rabbit) protein is Haptoglobin (HP).